Here is a 476-residue protein sequence, read N- to C-terminus: Glycogen synthase (476 aa).

Position 15 (lysine 15) interacts with ADP-alpha-D-glucose.

Belongs to the glycosyltransferase 1 family. Bacterial/plant glycogen synthase subfamily.

The catalysed reaction is [(1-&gt;4)-alpha-D-glucosyl](n) + ADP-alpha-D-glucose = [(1-&gt;4)-alpha-D-glucosyl](n+1) + ADP + H(+). It functions in the pathway glycan biosynthesis; glycogen biosynthesis. Functionally, synthesizes alpha-1,4-glucan chains using ADP-glucose. This Haemophilus influenzae (strain PittGG) protein is Glycogen synthase.